A 242-amino-acid chain; its full sequence is B-box zinc finger protein 20 (242 aa).

Zn(2+) contacts are provided by cysteine 5, cysteine 8, cysteine 28, histidine 33, cysteine 58, cysteine 61, cysteine 81, and histidine 91. The B box-type 1; atypical zinc finger occupies 5–47; the sequence is CAVCDKEEASVFCCADEAALCNGCDRHVHFANKLAGKHLRFSL. Residues 58 to 100 form a B box-type 2; atypical zinc finger; sequence CDICGERRALLFCQEDRAILCRECDIPIHQANEHTKKHNRFLL. The segment at 112-153 is disordered; the sequence is YPRASNSNSAAAFGRAKTRPKSVSSEVPSSASNEVFTSSSST. The segment covering 133–153 has biased composition (low complexity); the sequence is SVSSEVPSSASNEVFTSSSST.

As to quaternary structure, interacts with MED25 and COP1. Post-translationally, COP1-mediated ubiquitination and subsequent proteasomal degradation of BBX20 occurs in the dark.

It is found in the nucleus. Acts as a positive regulator of seedling photomorphogenesis. Plays a negative role in brassinosteroid responses. The protein is B-box zinc finger protein 20 of Arabidopsis thaliana (Mouse-ear cress).